Consider the following 907-residue polypeptide: MFSKILTKVIGSRNDRTLRKLRKIVDQINKLEPQFESLQDEELKAKTIEFRARLEQGEDLDNLLPEAFATVREASKRLYGMRHFDVQMIGGMVLNDSQIAEMRTGEGKTLTATLPCYLNALTGKGVHVVTVNDYLAKRDAETNRELFEFLGMTVGVNVPNMPPQEKKQAYLCDILYGTNNEFGFDYLRDNMAFRAEDRVQRERYFAVVDEVDSILIDEARTPLIISGPAEDSSELYIRINTLIPQLVKQDEEDSEEYRGEGHYTLDEKGKQTHLTENGQEFVEQLLKDAGLMEEDDTLYSPANISLLHHINAALRAHVLFEKDVDYIVKDDEVIIVDEHTGRTMPGRRWSEGLHQAVEAKEGVKIQNENQTLASITFQNFFRLYEKLSGMTGTADTEAFEFQSIYGLDTVVIPTNRPMARNDMGDLVYMTEAEKFAAIIEDIKGCSERGQPVLVGTVSIEKSELLSNALKKAKIKHNVLNAKFHEQEADIVANAGTASAVTIATNMAGRGTDIVLGGSWQADVAKLSDPTEEQIQAVKAKWKEAHDAVLASGGLHIIGTERHESRRIDNQLRGRAGRQGDAGSSRFYLSMEDALMRIFASDRVSGMMKKLGMEEGEAIEHPWVTKAIENAQRKVEGRNFDIRKQLLEYDDVANDQRKVVYELRDELMNVDDISEMIGYNRQEVLEGLFGQYIPPQSLEEMWDVEGLTTRLRADFDLDLPLQEWLDNDDKLHEDNLREKIIEAAVQVYKEKEESVGESVLRNFEKAVMLQTLDGLWKEHLAAMDHLRQGIHLRGYAQKNPKQEYKRESFELFEGLLDTLKFDVVSILSKVRVQQQEDVERMEEQRRLQAEEAARRQQLQHQNAENQLDDGEGAEEAHSPMVREERKVGRNEPCPCGSGKKYKQCHGKI.

ATP-binding positions include Q87, 105 to 109, and D512; that span reads GEGKT. The tract at residues 834–907 is disordered; that stretch reads QEDVERMEEQ…KKYKQCHGKI (74 aa). Composition is skewed to basic and acidic residues over residues 836–853 and 873–888; these read DVER…EAAR and EEAH…KVGR. The Zn(2+) site is built by C892, C894, C903, and H904. A compositionally biased stretch (basic residues) spans 898–907; that stretch reads KKYKQCHGKI.

The protein belongs to the SecA family. In terms of assembly, monomer and homodimer. Part of the essential Sec protein translocation apparatus which comprises SecA, SecYEG and auxiliary proteins SecDF-YajC and YidC. The cofactor is Zn(2+).

The protein resides in the cell inner membrane. The protein localises to the cytoplasm. It catalyses the reaction ATP + H2O + cellular proteinSide 1 = ADP + phosphate + cellular proteinSide 2.. Part of the Sec protein translocase complex. Interacts with the SecYEG preprotein conducting channel. Has a central role in coupling the hydrolysis of ATP to the transfer of proteins into and across the cell membrane, serving both as a receptor for the preprotein-SecB complex and as an ATP-driven molecular motor driving the stepwise translocation of polypeptide chains across the membrane. In Aliivibrio fischeri (strain MJ11) (Vibrio fischeri), this protein is Protein translocase subunit SecA.